Here is a 256-residue protein sequence, read N- to C-terminus: uncharacterized protein (256 aa).

It belongs to the glycosyltransferase 2 family.

This is an uncharacterized protein from Acanthamoeba polyphaga mimivirus (APMV).